Consider the following 546-residue polypeptide: Casein kinase I homolog 2 (546 aa).

Polar residues-rich tracts occupy residues 1–33 (MSQV…SNVR) and 44–55 (HVSSNLNHNTGN). Residues 1–67 (MSQVQSPLTA…ASYSGSQSRD (67 aa)) form a disordered region. Residue Ser-2 is modified to N-acetylserine. A Protein kinase domain is found at 76 to 360 (YKIGKKIGEG…ETADGQYDWM (285 aa)). Residues 82-90 (IGEGSFGVL) and Lys-105 contribute to the ATP site. Asp-195 serves as the catalytic Proton acceptor. 2 disordered regions span residues 373–425 (NKKP…QAQA) and 443–546 (QQAN…LGCC). A compositionally biased stretch (low complexity) spans 412–425 (QQQQQQQAQAQAQA). Over residues 453 to 465 (DDSHYDEEREASK) the composition is skewed to basic and acidic residues. At Ser-455 the chain carries Phosphoserine. A Glycyl lysine isopeptide (Lys-Gly) (interchain with G-Cter in ubiquitin) cross-link involves residue Lys-465. Positions 475 to 496 (QQQTQQKYAQQQQKQMQQKSKQ) are enriched in low complexity. The segment covering 497–530 (FANTGANGQTNKYPYNAQPTANDEQNAKNAAQDR) has biased composition (polar residues). The segment covering 533-546 (NKSSKGFFSKLGCC) has biased composition (low complexity). Residues Cys-545 and Cys-546 are each lipidated (S-palmitoyl cysteine).

It belongs to the protein kinase superfamily. CK1 Ser/Thr protein kinase family. Casein kinase I subfamily. In terms of processing, palmitoylated by AKR1, which is required for proper plasma membrane localization of YCK2.

The protein localises to the cell membrane. It catalyses the reaction L-seryl-[protein] + ATP = O-phospho-L-seryl-[protein] + ADP + H(+). It carries out the reaction L-threonyl-[protein] + ATP = O-phospho-L-threonyl-[protein] + ADP + H(+). Casein kinases are operationally defined by their preferential utilization of acidic proteins such as caseins as substrates. This is Casein kinase I homolog 2 (YCK2) from Saccharomyces cerevisiae (strain ATCC 204508 / S288c) (Baker's yeast).